Consider the following 155-residue polypeptide: SsrA-binding protein (155 aa).

The protein belongs to the SmpB family.

It is found in the cytoplasm. Functionally, required for rescue of stalled ribosomes mediated by trans-translation. Binds to transfer-messenger RNA (tmRNA), required for stable association of tmRNA with ribosomes. tmRNA and SmpB together mimic tRNA shape, replacing the anticodon stem-loop with SmpB. tmRNA is encoded by the ssrA gene; the 2 termini fold to resemble tRNA(Ala) and it encodes a 'tag peptide', a short internal open reading frame. During trans-translation Ala-aminoacylated tmRNA acts like a tRNA, entering the A-site of stalled ribosomes, displacing the stalled mRNA. The ribosome then switches to translate the ORF on the tmRNA; the nascent peptide is terminated with the 'tag peptide' encoded by the tmRNA and targeted for degradation. The ribosome is freed to recommence translation, which seems to be the essential function of trans-translation. This chain is SsrA-binding protein, found in Bacillus cereus (strain G9842).